The primary structure comprises 688 residues: Glycine--tRNA ligase beta subunit (688 aa).

This sequence belongs to the class-II aminoacyl-tRNA synthetase family. In terms of assembly, tetramer of two alpha and two beta subunits.

Its subcellular location is the cytoplasm. It catalyses the reaction tRNA(Gly) + glycine + ATP = glycyl-tRNA(Gly) + AMP + diphosphate. The sequence is that of Glycine--tRNA ligase beta subunit from Haemophilus influenzae (strain PittEE).